Consider the following 421-residue polypeptide: Probable UDP-arabinose 4-epimerase 1 (421 aa).

Residues 1–33 lie on the Cytoplasmic side of the membrane; sequence MLPTNRNRPQQRPARSWYFISDMDFSDPKRKPR. Residues 34-53 form a helical; Signal-anchor for type II membrane protein membrane-spanning segment; the sequence is YLSKILMVALLTAMCVVMLT. At 54-421 the chain is on the lumenal side; the sequence is QPPCHRRTPS…GYGPPQAMVL (368 aa). An NAD(+)-binding site is contributed by 74-105; sequence HVLVTGGAGYIGSHAALRLLKDSFRVTIVDNL. Tyr-222 acts as the Proton acceptor in catalysis.

The protein belongs to the NAD(P)-dependent epimerase/dehydratase family. Requires NAD(+) as cofactor.

It localises to the golgi apparatus. It is found in the golgi stack membrane. It carries out the reaction UDP-beta-L-arabinopyranose = UDP-alpha-D-xylose. It participates in nucleotide-sugar biosynthesis; UDP-L-arabinose biosynthesis; UDP-L-arabinose from UDP-alpha-D-xylose: step 1/1. The protein operates within cell wall biogenesis; cell wall polysaccharide biosynthesis. This is Probable UDP-arabinose 4-epimerase 1 (UEL-1) from Oryza sativa subsp. japonica (Rice).